The following is a 326-amino-acid chain: Guanine nucleotide-binding protein subunit beta-like protein 1 (326 aa).

WD repeat units follow at residues 17 to 61, 64 to 104, 159 to 202, 205 to 244, 250 to 291, and 292 to 325; these read GTQS…IVTT, GHGG…NTIM, ARPG…VCSQ, CHEE…SLQV, LTNP…AVLA, and FHSA…LYPC.

As to expression, expressed at low levels in most tissues and highly expressed in adult testis. Widely expressed in adult brain with striking regional distribution in forebrain, midbrain, and hindbrain structures, including the thalamus, hypothalamus, amygdala, hippocampus, pons.

The protein localises to the cytoplasm. It is found in the nucleus. In terms of biological role, acts as a critical regulator of DNA damage response (DDR) signaling via specifically regulating phosphatidylinositol 3-kinase-related protein kinase (PIKK) family proteins. The polypeptide is Guanine nucleotide-binding protein subunit beta-like protein 1 (Gnb1l) (Mus musculus (Mouse)).